Here is a 270-residue protein sequence, read N- to C-terminus: Regulator of G-protein signaling rgs-10 (270 aa).

In terms of domain architecture, RGS spans 135-252; that stretch reads SPETLAASEY…LEDPLYLDLV (118 aa).

In terms of biological role, shown to have a role in viability and embryogenesis. The polypeptide is Regulator of G-protein signaling rgs-10 (rgs-10) (Caenorhabditis elegans).